The primary structure comprises 609 residues: Granule-bound starch synthase 1, chloroplastic/amyloplastic (609 aa).

The transit peptide at 1-77 (MSALTTSQLA…SRRFPSVVVY (77 aa)) directs the protein to the chloroplast. The segment at 29 to 67 (RHGFQGLKPRSPAGGDATSLSVTTSARATPKQQRSVQRG) is disordered. A compositionally biased stretch (polar residues) spans 46–66 (TSLSVTTSARATPKQQRSVQR). Position 97 (Lys97) interacts with ADP-alpha-D-glucose.

The protein belongs to the glycosyltransferase 1 family. Bacterial/plant glycogen synthase subfamily.

The protein localises to the plastid. It is found in the chloroplast. The protein resides in the amyloplast. The catalysed reaction is an NDP-alpha-D-glucose + [(1-&gt;4)-alpha-D-glucosyl](n) = [(1-&gt;4)-alpha-D-glucosyl](n+1) + a ribonucleoside 5'-diphosphate + H(+). Its pathway is glycan biosynthesis; starch biosynthesis. Its function is as follows. Required for the synthesis of amylose in endosperm. The polypeptide is Granule-bound starch synthase 1, chloroplastic/amyloplastic (WAXY) (Oryza glaberrima (African rice)).